Reading from the N-terminus, the 115-residue chain is MNMLTALLVNITLSMLLIIIAFWLPQLNLYTEKANPYECGFDPMGSARLPFSMKFFLVAITFLLFDLEIALLLPLPWAIQMYYINIMMSTAFILVSVLALGLAYEWLQKGLEWTE.

3 helical membrane-spanning segments follow: residues L4–L24, F55–L75, and Y83–A103.

The protein belongs to the complex I subunit 3 family. Core subunit of respiratory chain NADH dehydrogenase (Complex I) which is composed of 45 different subunits. Interacts with TMEM186. Interacts with TMEM242.

The protein localises to the mitochondrion inner membrane. The enzyme catalyses a ubiquinone + NADH + 5 H(+)(in) = a ubiquinol + NAD(+) + 4 H(+)(out). Core subunit of the mitochondrial membrane respiratory chain NADH dehydrogenase (Complex I) which catalyzes electron transfer from NADH through the respiratory chain, using ubiquinone as an electron acceptor. Essential for the catalytic activity of complex I. The chain is NADH-ubiquinone oxidoreductase chain 3 from Peromyscus polionotus (Oldfield mouse).